A 234-amino-acid polypeptide reads, in one-letter code: RNA chaperone ProQ (234 aa).

The span at Leu-104–Glu-130 shows a compositional bias: basic and acidic residues. The disordered stretch occupies residues Leu-104–Glu-186. Positions Pro-131–Thr-142 are enriched in basic residues. Composition is skewed to basic and acidic residues over residues Ala-143–Lys-156 and Thr-163–Glu-176. Residues Gln-177 to Glu-186 are compositionally biased toward polar residues.

It belongs to the ProQ family.

The protein resides in the cytoplasm. Functionally, RNA chaperone with significant RNA binding, RNA strand exchange and RNA duplexing activities. May regulate ProP activity through an RNA-based, post-transcriptional mechanism. This chain is RNA chaperone ProQ, found in Edwardsiella ictaluri (strain 93-146).